The chain runs to 264 residues: MTGHHGWGYGQDDGPSHWHKLYPIAQGDRQSPINIISSQAVYSPSLQPLELSYEACMSLSITNNGHSVQVDFNDSDDRTVVTGGPLEGPYRLKQFHFHWGKKHDVGSEHTVDGKSFPSELHLVHWNAKKYSTFGEAASAPDGLAVVGVFLETGDEHPSMNRLTDALYMVRFKGTKAQFSCFNPKCLLPASRHYWTYPGSLTTPPLSESVTWIVLREPICISERQMGKFRSLLFTSEDDERIHMVNNFRPPQPLKGRVVKASFRA.

The Alpha-carbonic anhydrase domain maps to 5 to 262 (HGWGYGQDDG…LKGRVVKASF (258 aa)). H66 acts as the Proton donor/acceptor in catalysis. H96, H98, and H121 together coordinate Zn(2+). Position 201-202 (201-202 (TT)) interacts with substrate.

This sequence belongs to the alpha-carbonic anhydrase family. It depends on Zn(2+) as a cofactor.

The protein resides in the cytoplasm. It catalyses the reaction hydrogencarbonate + H(+) = CO2 + H2O. Its activity is regulated as follows. Activated by histamine, L-adrenaline, L- and D-histidine, and L- and D-phenylalanine. Inhibited by coumarins, sulfonamide derivatives such as acetazolamide (AZA), by saccharin and Foscarnet (phosphonoformate trisodium salt). Its function is as follows. Reversible hydration of carbon dioxide. In Homo sapiens (Human), this protein is Carbonic anhydrase 7 (CA7).